Reading from the N-terminus, the 132-residue chain is MDCGVFEGTVFSGLGHGSFYVSIYARNLRRALGYTPYPGTLNLRVGDAAERLAGCIERARGVRIEPPPIPGERLASVLAFPVEIEGGVRGHIVRPEITVYKGDVVEIVADVYLRDVLKISDGDKVRFRLLDP.

13-18 (GLGHGS) serves as a coordination point for CDP. Residues T40 and N42 each coordinate Mg(2+). The FMN site is built by T98 and E106. CDP is bound at residue 111–114 (VYLR).

This sequence belongs to the archaeal riboflavin kinase family. Mg(2+) is required as a cofactor.

The catalysed reaction is riboflavin + CTP = CDP + FMN + H(+). The protein operates within cofactor biosynthesis; FMN biosynthesis; FMN from riboflavin (CTP route): step 1/1. Functionally, catalyzes the CTP-dependent phosphorylation of riboflavin (vitamin B2) to form flavin mononucleotide (FMN). The polypeptide is Riboflavin kinase (Aeropyrum pernix (strain ATCC 700893 / DSM 11879 / JCM 9820 / NBRC 100138 / K1)).